The sequence spans 225 residues: Membrane protein (225 aa).

At 1–20 (MPNETNCTLDFEQSVQLFKE) the chain is on the virion surface side. A helical transmembrane segment spans residues 21-41 (YNLFITAFLLFLTIILQYGYA). Residues 42–51 (TRSKVIYTLK) lie on the Intravirion side of the membrane. The helical transmembrane segment at 52-72 (MIVLWCFWPLNIAVGVISCTY) threads the bilayer. The Virion surface portion of the chain corresponds to 73–77 (PPNTG). Residues 78–98 (GLVAAIILTVFACLSFVGYWI) form a helical membrane-spanning segment. Topologically, residues 99-225 (QSIRLFKRCR…VATGGSSLYT (127 aa)) are intravirion.

It belongs to the gammacoronaviruses M protein family. Homomultimer. Interacts with envelope E protein in the budding compartment of the host cell, which is located between endoplasmic reticulum and the Golgi complex. Forms a complex with HE and S proteins. Interacts with nucleocapsid N protein. This interaction probably participates in RNA packaging into the virus.

It is found in the virion membrane. Its subcellular location is the host Golgi apparatus membrane. In terms of biological role, component of the viral envelope that plays a central role in virus morphogenesis and assembly via its interactions with other viral proteins. The chain is Membrane protein from Avian infectious bronchitis virus (strain Beaudette) (IBV).